The following is a 1897-amino-acid chain: MDNVISNIQTSLHEVHGRFETSGLNLTSLTSRVSALESGIDEDFSGQLSLKADKNEVAKFTSNSNVVTSYSVSQLGAKINNLEISDDNLQSSKVNKTRVSIALDDNGNDISDYTLSQEGLGNKLKVMDNEIGLRALTSRIASFTRDGVLTNLSSVELGARLIATESNADTRALKSEVSSHTDAENVTTTYGVTSLGAELHRIAVAVNSLDTYVLKTEVSRLESNGVVVPEYTLTQTELGAKLKNIVDSISNFVVNTQVSKNYDEGTLNYELNAYTLSDYELGAMLERFDTTHLLKSQVSKRYVLNADGSVSNDFNSDYTLSDFELGTKLFDIDTLLNTKISGEEVSINTSDPAYTLNQSELGTLLKTLTGRIDLVSPADADSSIFALKTSVSTHASNTAYTLSTTALATKLESMDSLLSSHGTLIDSKASISNMNERALQSRVSLKFINNDGVTIDEKFTCSVLELGSLLFNMDAATEAIARNYVTDEELAAAVATAVATTGALTSTSLLTTTVSTITKGGSSVVRTAADLARAVFGGGDSDDDDDPPPPVFIYRSEGIFRPANWGSDGNVDGYSRPMIEGRENIYASDGTAQDLHSYIINLVAGNAKVFYRDVSYTSKIRLLGSSGSADDKAAQYGPPASTSYFFPAPASLATVEAGLSWGSSTTRTQSDGTTLSGYTGGIHVLSCFGTSRFEGRSESRKVVWLTGAGTAASSTLDAKLAFDGTGGDAPIHVFGESTTKYGLDLHDAGLVMRNSQSNAKIDIKYHSSNLVFASLTPNVIPASPDILESILTIDSSANSVGIAGGASSQYKLYVHGGANFTSGITSSSASITGNNNSIPSLSISNTTVGAKKEFKMSTDQDGLIIEYGTATSGVVVMDTRISMNDTFTTVDSVGTNSGLEVVGKLGNKASMVLRHMPNSDNTKGTITLGRYLSIKTDLDASRLYTGYTSLDATELIYMDNSNVIVKGDLSVSGNISLIDTSVTPNTTTNIVSGISTALGRVSTLINGGDLSMLRPDGTSIVVRAANIESIGHPAYTVTDEQGVVTSVERTGLFLRPDSFAVDDQIDARLTSVGLTEGDGNENNPLTLNVYTIPQIDGIIAEGHVAGSVSRIIFSSSETLGSRTFPSVAITPINNPFITNATITNTIVGIKRVTVSGNSNEQGSGYVAGDTITISDSFGTGTNAVFTVVNASSGGVDGGSTSLTITNPGAYTSISGTPIVIVEENPTYPAVTGITQQSSSGSGTGVTFSVELSVISVDIFNAGKGYVTSPSVVVSGTYVDTVSNTTTTSGIQSAVAVLHTTSNVTVLDSRFSKAATLSISNTATQLTSALNGYVSTSDLGDELANYYNIDEIVEGFAPIAAPGETYAYLSTTSLENYQTRAASNILYQAKETADNAYIRASDLTASGTGFYDKTTSDERYQAQPASGESFALASSLVNLVDTSTTALTNYSTTNEASTLYQAKEDLNDPYVLRSTVSLDNYDTTTTINEKIAGVSSHFTKSGNNITYNYAGNVGIGGTPNTKLEVYGSIQALPITDTSCVFGNARVGGGAYAGYAHFTHAAINPTHFGNYALLQYSSGHTFLNCSAGSGVGLSFRKNNADWMEYQGNGLLYVTSGNTRYISYIGFQYNPSGLAAGIMAGTGNIVVSMKVLYAIECQRILVVSDERVKTNIRDVNDHEALDIIRLIKPKKFEYIDKESAGPGTIYGFIAQDIIQHVPECVKKGPGVIANIMDTARVCNGRTLIFERFDTSNLKGVNGTIQVLDVDGKNHDVIVETILDSRTVIINKDLSAYTGSVDENGVPQKVKHTTTLTQSEYDAYEDKSDIVKDGDTYTRTEYSNVGDNVFVRGEHVDDFHTMDKDHIIAITTAALQEIDRQLQLEKAKVISLESRLSALELKFGV.

Positions 1661–1888 constitute a Peptidase S74 domain; it reads SDERVKTNIR…AKVISLESRL (228 aa). Positions 1865-1894 form a coiled coil; it reads AALQEIDRQLQLEKAKVISLESRLSALELK.

This is an uncharacterized protein from Micromonas pusilla (Picoplanktonic green alga).